The primary structure comprises 78 residues: Probable [Fe-S]-dependent transcriptional repressor (78 aa).

Residues cysteine 56, cysteine 61, cysteine 64, and cysteine 70 each coordinate iron-sulfur cluster.

The protein belongs to the FeoC family.

In terms of biological role, may function as a transcriptional regulator that controls feoABC expression. This is Probable [Fe-S]-dependent transcriptional repressor from Escherichia coli O17:K52:H18 (strain UMN026 / ExPEC).